A 240-amino-acid chain; its full sequence is Probable septum site-determining protein MinC (240 aa).

It belongs to the MinC family. In terms of assembly, interacts with MinD and FtsZ.

Its function is as follows. Cell division inhibitor that blocks the formation of polar Z ring septums. Rapidly oscillates between the poles of the cell to destabilize FtsZ filaments that have formed before they mature into polar Z rings. Prevents FtsZ polymerization. This chain is Probable septum site-determining protein MinC, found in Acinetobacter baumannii (strain ACICU).